The primary structure comprises 526 residues: 4-alpha-glucanotransferase (526 aa).

Belongs to the disproportionating enzyme family.

Its subcellular location is the cytoplasm. It carries out the reaction Transfers a segment of a (1-&gt;4)-alpha-D-glucan to a new position in an acceptor, which may be glucose or a (1-&gt;4)-alpha-D-glucan.. The polypeptide is 4-alpha-glucanotransferase (malQ) (Chlamydia pneumoniae (Chlamydophila pneumoniae)).